The sequence spans 168 residues: 2-C-methyl-D-erythritol 2,4-cyclodiphosphate synthase (168 aa).

A divalent metal cation is bound by residues Asp-11 and His-13. 4-CDP-2-C-methyl-D-erythritol 2-phosphate-binding positions include Asp-11–His-13 and His-41–Ser-42. His-49 is an a divalent metal cation binding site. Residues Asp-63–Gly-65, Phe-68–Asp-72, Thr-139–Glu-142, Phe-146, and Arg-149 each bind 4-CDP-2-C-methyl-D-erythritol 2-phosphate.

The protein belongs to the IspF family. In terms of assembly, homotrimer. A divalent metal cation serves as cofactor.

The catalysed reaction is 4-CDP-2-C-methyl-D-erythritol 2-phosphate = 2-C-methyl-D-erythritol 2,4-cyclic diphosphate + CMP. It functions in the pathway isoprenoid biosynthesis; isopentenyl diphosphate biosynthesis via DXP pathway; isopentenyl diphosphate from 1-deoxy-D-xylulose 5-phosphate: step 4/6. Its function is as follows. Involved in the biosynthesis of isopentenyl diphosphate (IPP) and dimethylallyl diphosphate (DMAPP), two major building blocks of isoprenoid compounds. Catalyzes the conversion of 4-diphosphocytidyl-2-C-methyl-D-erythritol 2-phosphate (CDP-ME2P) to 2-C-methyl-D-erythritol 2,4-cyclodiphosphate (ME-CPP) with a corresponding release of cytidine 5-monophosphate (CMP). This chain is 2-C-methyl-D-erythritol 2,4-cyclodiphosphate synthase, found in Psychrobacter arcticus (strain DSM 17307 / VKM B-2377 / 273-4).